The chain runs to 151 residues: Protein NrdI (151 aa).

Belongs to the NrdI family.

Its function is as follows. Probably involved in ribonucleotide reductase function. The sequence is that of Protein NrdI from Mycoplasmopsis pulmonis (strain UAB CTIP) (Mycoplasma pulmonis).